The primary structure comprises 208 residues: Outer-membrane lipoprotein carrier protein (208 aa).

A signal peptide spans 1 to 22 (MKNLLCAVMLTSPLLYSTAVFA).

Belongs to the LolA family. Monomer.

It is found in the periplasm. Its function is as follows. Participates in the translocation of lipoproteins from the inner membrane to the outer membrane. Only forms a complex with a lipoprotein if the residue after the N-terminal Cys is not an aspartate (The Asp acts as a targeting signal to indicate that the lipoprotein should stay in the inner membrane). The sequence is that of Outer-membrane lipoprotein carrier protein from Shewanella sp. (strain W3-18-1).